Here is a 131-residue protein sequence, read N- to C-terminus: Type-5 thionin (131 aa).

The signal sequence occupies residues 1-29 (MGGGQKGLESAIVCLLVLGLVLEQVQVEG). A propeptide spans 67–131 (LASVRSSDEP…GDTLLASLDD (65 aa)) (acidic domain).

This sequence belongs to the plant thionin (TC 1.C.44) family. In terms of processing, is disulfide-linked. In terms of tissue distribution, developing endosperm.

The protein resides in the secreted. Functionally, thionins are small plant proteins which are toxic to animal cells. They seem to exert their toxic effect at the level of the cell membrane. Their precise function is not known. The protein is Type-5 thionin (TTHV) of Triticum aestivum (Wheat).